The following is a 263-amino-acid chain: UPF0246 protein Strop_2927 (263 aa).

This sequence belongs to the UPF0246 family.

The polypeptide is UPF0246 protein Strop_2927 (Salinispora tropica (strain ATCC BAA-916 / DSM 44818 / JCM 13857 / NBRC 105044 / CNB-440)).